The following is a 416-amino-acid chain: 26S proteasome regulatory subunit 8 (416 aa).

Low complexity predominate over residues 1–18 (MAPPASTASSADPSKPTA). Positions 1–29 (MAPPASTASSADPSKPTAQKLTEESDEKT) are disordered. 200 to 207 (GPPGTGKT) contributes to the ATP binding site.

This sequence belongs to the AAA ATPase family. Component of the 19S proteasome regulatory particle complex. The 26S proteasome consists of a 20S core particle (CP) and two 19S regulatory subunits (RP). Interacts with elt-2.

It localises to the cytoplasm. The protein resides in the nucleus. Component of the 26S proteasome, a multiprotein complex involved in the ATP-dependent degradation of ubiquitinated proteins. This complex plays a key role in the maintenance of protein homeostasis by removing misfolded or damaged proteins, which could impair cellular functions, and by removing proteins whose functions are no longer required. Therefore, the proteasome participates in numerous cellular processes, including cell cycle progression, apoptosis, or DNA damage repair. Belongs to the heterohexameric ring of AAA (ATPases associated with diverse cellular activities) proteins that unfolds ubiquitinated target proteins that are concurrently translocated into a proteolytic chamber and degraded into peptides. In addition, regulates gene expression in response to bacterial infection. Binds to the GATA transcription factor elt-2 to control its transcriptional activity and thus the expression of elt-2-dependent genes in response to infection by Gram-negative bacteria such as P.aeruginosa. This chain is 26S proteasome regulatory subunit 8, found in Caenorhabditis elegans.